The sequence spans 199 residues: N-(5'-phosphoribosyl)anthranilate isomerase (199 aa).

Belongs to the TrpF family.

It catalyses the reaction N-(5-phospho-beta-D-ribosyl)anthranilate = 1-(2-carboxyphenylamino)-1-deoxy-D-ribulose 5-phosphate. It participates in amino-acid biosynthesis; L-tryptophan biosynthesis; L-tryptophan from chorismate: step 3/5. The chain is N-(5'-phosphoribosyl)anthranilate isomerase from Clostridium kluyveri (strain NBRC 12016).